The following is a 605-amino-acid chain: Elongation factor 4 (605 aa).

The region spanning 9–192 (HHIRNFCIIA…AIVKRVPAPS (184 aa)) is the tr-type G domain. GTP is bound by residues 21–26 (DHGKST) and 139–142 (NKID).

The protein belongs to the TRAFAC class translation factor GTPase superfamily. Classic translation factor GTPase family. LepA subfamily.

Its subcellular location is the cell inner membrane. The enzyme catalyses GTP + H2O = GDP + phosphate + H(+). Functionally, required for accurate and efficient protein synthesis under certain stress conditions. May act as a fidelity factor of the translation reaction, by catalyzing a one-codon backward translocation of tRNAs on improperly translocated ribosomes. Back-translocation proceeds from a post-translocation (POST) complex to a pre-translocation (PRE) complex, thus giving elongation factor G a second chance to translocate the tRNAs correctly. Binds to ribosomes in a GTP-dependent manner. This chain is Elongation factor 4, found in Chlorobium phaeobacteroides (strain DSM 266 / SMG 266 / 2430).